We begin with the raw amino-acid sequence, 225 residues long: uncharacterized protein (225 aa).

6 consecutive transmembrane segments (helical) span residues 1–21 (MFIGIVSLFLTVLVYLGAKKV), 31–51 (SPLLVTPAVLVGLLLLVNVPY), 56–76 (LGGGLLTDMLQPATVAFAIPL), 88–108 (VEIILNVAVGSCIAIISTALI), 145–165 (VTAVFVILTALLGTVIGPMVI), and 205–225 (VSMILAAIMTLCAAPFLLSFM).

This sequence belongs to the YohK (E.coli)/YwbG (IPA-22R) (B.subtilis) family.

The protein localises to the cell membrane. This is an uncharacterized protein from Bacillus subtilis (strain 168).